The sequence spans 269 residues: Chymotrypsin-like elastase family member 2B (269 aa).

An N-terminal signal peptide occupies residues 1–16; the sequence is MIRTLLLSTLVAGALS. The propeptide at 17–28 is activation peptide; sequence CGVSTYAPDMSR. Positions 29–267 constitute a Peptidase S1 domain; sequence MLGGEEARPN…YNDWINSVIA (239 aa). A disulfide bond links Cys-58 and Cys-74. Active-site charge relay system residues include His-73 and Asp-121. Cystine bridges form between Cys-155–Cys-222, Cys-186–Cys-202, and Cys-212–Cys-243. Ser-216 functions as the Charge relay system in the catalytic mechanism.

It belongs to the peptidase S1 family. Elastase subfamily. As to expression, pancreas.

It localises to the secreted. It catalyses the reaction Preferential cleavage: Leu-|-Xaa, Met-|-Xaa and Phe-|-Xaa. Hydrolyzes elastin.. Acts upon elastin. This is Chymotrypsin-like elastase family member 2B (CELA2B) from Homo sapiens (Human).